We begin with the raw amino-acid sequence, 597 residues long: CTP synthase (597 aa).

The segment at 1–272 is amidoligase domain; the sequence is MARPKNVKYV…DMRVLKKLGL (272 aa). A CTP-binding site is contributed by S18. S18 serves as a coordination point for UTP. 19-24 lines the ATP pocket; the sequence is SLGKGI. An L-glutamine-binding site is contributed by Y59. D76 contacts ATP. Mg(2+) contacts are provided by D76 and E146. CTP-binding positions include 153–155, 193–198, and K229; these read DIE and KTKPTQ. UTP contacts are provided by residues 193–198 and K229; that span reads KTKPTQ. The Glutamine amidotransferase type-1 domain maps to 299–543; that stretch reads NVAICGKYTE…VGAAKAYADG (245 aa). Position 363 (G363) interacts with L-glutamine. The Nucleophile; for glutamine hydrolysis role is filled by C390. L-glutamine-binding positions include 391–394, E414, and R471; that span reads LGMQ. Active-site residues include H516 and E518.

The protein belongs to the CTP synthase family. As to quaternary structure, homotetramer.

It catalyses the reaction UTP + L-glutamine + ATP + H2O = CTP + L-glutamate + ADP + phosphate + 2 H(+). The enzyme catalyses L-glutamine + H2O = L-glutamate + NH4(+). The catalysed reaction is UTP + NH4(+) + ATP = CTP + ADP + phosphate + 2 H(+). It functions in the pathway pyrimidine metabolism; CTP biosynthesis via de novo pathway; CTP from UDP: step 2/2. With respect to regulation, allosterically activated by GTP, when glutamine is the substrate; GTP has no effect on the reaction when ammonia is the substrate. The allosteric effector GTP functions by stabilizing the protein conformation that binds the tetrahedral intermediate(s) formed during glutamine hydrolysis. Inhibited by the product CTP, via allosteric rather than competitive inhibition. Catalyzes the ATP-dependent amination of UTP to CTP with either L-glutamine or ammonia as the source of nitrogen. Regulates intracellular CTP levels through interactions with the four ribonucleotide triphosphates. This chain is CTP synthase, found in Chlorobium luteolum (strain DSM 273 / BCRC 81028 / 2530) (Pelodictyon luteolum).